The following is a 176-amino-acid chain: Large ribosomal subunit protein uL10 (176 aa).

This sequence belongs to the universal ribosomal protein uL10 family. In terms of assembly, part of the ribosomal stalk of the 50S ribosomal subunit. The N-terminus interacts with L11 and the large rRNA to form the base of the stalk. The C-terminus forms an elongated spine to which L12 dimers bind in a sequential fashion forming a multimeric L10(L12)X complex.

Forms part of the ribosomal stalk, playing a central role in the interaction of the ribosome with GTP-bound translation factors. The chain is Large ribosomal subunit protein uL10 from Teredinibacter turnerae (strain ATCC 39867 / T7901).